The following is a 198-amino-acid chain: tRNA (pseudouridine(54)-N(1))-methyltransferase (198 aa).

S-adenosyl-L-methionine is bound by residues leucine 130, glycine 153, leucine 176–leucine 181, and cysteine 186.

This sequence belongs to the methyltransferase superfamily. TrmY family. As to quaternary structure, homodimer.

Its subcellular location is the cytoplasm. The catalysed reaction is pseudouridine(54) in tRNA + S-adenosyl-L-methionine = N(1)-methylpseudouridine(54) in tRNA + S-adenosyl-L-homocysteine + H(+). Functionally, specifically catalyzes the N1-methylation of pseudouridine at position 54 (Psi54) in tRNAs. This chain is tRNA (pseudouridine(54)-N(1))-methyltransferase, found in Methanococcus maripaludis (strain C6 / ATCC BAA-1332).